A 240-amino-acid polypeptide reads, in one-letter code: Bidirectional sugar transporter SWEET5 (240 aa).

The Extracellular portion of the chain corresponds to 1-9 (MTDPHTART). A helical membrane pass occupies residues 10 to 30 (IVGIVGNVISFGLFCAPIPTM). Residues 10–95 (IVGIVGNVIS…YVTIFFVFAT (86 aa)) enclose the MtN3/slv 1 domain. The Cytoplasmic portion of the chain corresponds to 31–45 (VKIWKMKSVSEFKPD). The chain crosses the membrane as a helical span at residues 46 to 66 (PYVATVLNCMMWTFYGLPFVQ). At 67–72 (PDSLLV) the chain is on the extracellular side. Residues 73-93 (ITINGTGLFMELVYVTIFFVF) traverse the membrane as a helical segment. At 94-103 (ATSPVRRKIT) the chain is on the cytoplasmic side. Residues 104–124 (IAMVIEVIFMAVVIFCTMYFL) form a helical membrane-spanning segment. At 125 to 131 (HTTKQRS) the chain is on the extracellular side. A helical membrane pass occupies residues 132 to 152 (MLIGILCIVFNVIMYAAPLTV). Positions 133–217 (LIGILCIVFN…IIYITYYKTT (85 aa)) constitute a MtN3/slv 2 domain. Over 153 to 165 (MKLVIKTKSVKYM) the chain is Cytoplasmic. A helical transmembrane segment spans residues 166-186 (PFFLSLANFMNGVVWVIYACL). Residues 187 to 190 (KFDP) are Extracellular-facing. Residues 191-211 (YILIPNGLGSLSGIIQLIIYI) traverse the membrane as a helical segment. The Cytoplasmic portion of the chain corresponds to 212–240 (TYYKTTNWNDDDEDKEKRYSNAGIELGQA).

It belongs to the SWEET sugar transporter family. Forms homooligomers and heterooligomers with SWEET6, SWEET8, SWEET9, SWEET11 and SWEET12.

It localises to the cell membrane. Its function is as follows. Mediates both low-affinity uptake and efflux of sugar across the plasma membrane. May play roles in nurturing the male gametophyte. This chain is Bidirectional sugar transporter SWEET5, found in Arabidopsis thaliana (Mouse-ear cress).